Consider the following 280-residue polypeptide: uncharacterized protein (280 aa).

The span at 1–10 shows a compositional bias: basic residues; sequence MSSSIKKLKK. Residues 1–45 are disordered; the sequence is MSSSIKKLKKDTKDTDKTPSKKIYQETHNSEDSEDSEDSDNENNT. A compositionally biased stretch (basic and acidic residues) spans 11–31; sequence DTKDTDKTPSKKIYQETHNSE. Residues 32-41 are compositionally biased toward acidic residues; it reads DSEDSEDSDN.

This is an uncharacterized protein from Acanthamoeba polyphaga mimivirus (APMV).